The following is a 156-amino-acid chain: Transcription elongation factor GreA (156 aa).

A coiled-coil region spans residues 1–84; that stretch reads MAKYTISKHR…IEDVLRSTDE (84 aa).

The protein belongs to the GreA/GreB family.

Its function is as follows. Necessary for efficient RNA polymerase transcription elongation past template-encoded arresting sites. The arresting sites in DNA have the property of trapping a certain fraction of elongating RNA polymerases that pass through, resulting in locked ternary complexes. Cleavage of the nascent transcript by cleavage factors such as GreA or GreB allows the resumption of elongation from the new 3'terminus. GreA releases sequences of 2 to 3 nucleotides. The polypeptide is Transcription elongation factor GreA (Ureaplasma parvum serovar 3 (strain ATCC 27815 / 27 / NCTC 11736)).